A 230-amino-acid chain; its full sequence is Sugar fermentation stimulation protein homolog (230 aa).

Belongs to the SfsA family.

The polypeptide is Sugar fermentation stimulation protein homolog (Thermoanaerobacter pseudethanolicus (strain ATCC 33223 / 39E) (Clostridium thermohydrosulfuricum)).